An 828-amino-acid chain; its full sequence is Hapless 2 (828 aa).

The signal sequence occupies residues 1–32 (MKNKLINLRSKHIYKLIIIIFFCIILKYYKWC). The Extracellular segment spans residues 33–680 (DFKNKVFFIQ…INTVKTLIGK (648 aa)). A disulfide bridge links cysteine 53 with cysteine 62. Asparagine 74 carries N-linked (GlcNAc...) asparagine glycosylation. 4 cysteine pairs are disulfide-bonded: cysteine 142–cysteine 209, cysteine 170–cysteine 381, cysteine 172–cysteine 191, and cysteine 363–cysteine 388. The cd loop; involved in gamete fusion stretch occupies residues 174-191 (TYNYFKDDEFIKRAKLKC). Residues asparagine 233, asparagine 250, asparagine 264, asparagine 293, and asparagine 333 are each glycosylated (N-linked (GlcNAc...) asparagine). N-linked (GlcNAc...) asparagine glycans are attached at residues asparagine 479, asparagine 516, asparagine 531, and asparagine 539. Cysteine 546 and cysteine 592 are joined by a disulfide. Residues 681-701 (FAIIAILIILAPALIPLLPFF) form a helical membrane-spanning segment. Topologically, residues 702–828 (LNFFFLFIST…SGKSKIPPLR (127 aa)) are cytoplasmic. The interval 773–828 (RKNKKKFNKNNISSNIKHKKGGKKVKQKEPNRNSNHTSHEYADTSPSGKSKIPPLR) is disordered. Residues 788–798 (IKHKKGGKKVK) show a composition bias toward basic residues. The span at 799–814 (QKEPNRNSNHTSHEYA) shows a compositional bias: basic and acidic residues.

Belongs to the HAP2/GCS1 family.

The protein resides in the cell membrane. In terms of biological role, during fertilization, required on male gametes for their fusion with female gametes, and for subsequent ookinete formation in the host. Thereby, required for mosquito-mediated transmission to other animals. Probably initiates the fusion of gamete cell membranes by inserting part of its extracellular domain into the cell membrane of a female gamete. In Plasmodium berghei (strain Anka), this protein is Hapless 2.